The sequence spans 1188 residues: Phospholipid-transporting ATPase IB (1188 aa).

At methionine 1–arginine 94 the chain is on the cytoplasmic side. The residue at position 45 (threonine 45) is a Phosphothreonine. A helical membrane pass occupies residues alanine 95–threonine 115. At glycine 116–threonine 119 the chain is on the extracellular side. A helical transmembrane segment spans residues threonine 120–phenylalanine 140. The Cytoplasmic portion of the chain corresponds to lysine 141 to glutamine 316. A helical membrane pass occupies residues isoleucine 317 to tyrosine 337. Residues tryptophan 338–leucine 364 lie on the Extracellular side of the membrane. The chain crosses the membrane as a helical span at residues threonine 365–valine 385. At lysine 386–valine 887 the chain is on the cytoplasmic side. Catalysis depends on aspartate 428, which acts as the 4-aspartylphosphate intermediate. The ATP site is built by aspartate 428, lysine 429, threonine 430, glutamate 528, phenylalanine 569, lysine 592, arginine 625, threonine 705, glycine 706, aspartate 707, arginine 795, and lysine 801. Aspartate 428 is a Mg(2+) binding site. Threonine 430 contributes to the Mg(2+) binding site. Residue aspartate 821 participates in Mg(2+) binding. Residues asparagine 824 and aspartate 825 each coordinate ATP. Aspartate 825 is a Mg(2+) binding site. Residues valine 888–phenylalanine 908 form a helical membrane-spanning segment. The Extracellular segment spans residues glutamate 909–arginine 910. The chain crosses the membrane as a helical span at residues tryptophan 911–phenylalanine 931. The Cytoplasmic segment spans residues glutamate 932–lysine 959. The chain crosses the membrane as a helical span at residues valine 960–methionine 980. Residues lysine 981 to tyrosine 997 lie on the Extracellular side of the membrane. The chain crosses the membrane as a helical span at residues leucine 998–leucine 1018. At glutamate 1019–histidine 1028 the chain is on the cytoplasmic side. A helical membrane pass occupies residues leucine 1029 to tryptophan 1049. Residues proline 1050–threonine 1063 are Extracellular-facing. A helical transmembrane segment spans residues methionine 1064–isoleucine 1084. At glutamate 1085–lysine 1188 the chain is on the cytoplasmic side. The tract at residues serine 1162 to lysine 1188 is disordered. The segment covering glutamine 1163 to lysine 1182 has biased composition (basic and acidic residues).

This sequence belongs to the cation transport ATPase (P-type) (TC 3.A.3) family. Type IV subfamily. As to quaternary structure, component of a P4-ATPase flippase complex which consists of a catalytic alpha subunit and an accessory beta subunit. Interacts with TMEM30A to form a flippase complex. It depends on Mg(2+) as a cofactor. In terms of tissue distribution, strongly expressed in the brain, cerebellum, retina and testis.

It localises to the membrane. It is found in the golgi apparatus membrane. Its subcellular location is the endosome membrane. The protein resides in the cell membrane. The protein localises to the photoreceptor outer segment membrane. It localises to the photoreceptor inner segment membrane. It carries out the reaction ATP + H2O + phospholipidSide 1 = ADP + phosphate + phospholipidSide 2.. It catalyses the reaction a 1,2-diacyl-sn-glycero-3-phospho-L-serine(out) + ATP + H2O = a 1,2-diacyl-sn-glycero-3-phospho-L-serine(in) + ADP + phosphate + H(+). The enzyme catalyses a 1,2-diacyl-sn-glycero-3-phosphoethanolamine(in) + ATP + H2O = a 1,2-diacyl-sn-glycero-3-phosphoethanolamine(out) + ADP + phosphate + H(+). Catalytic component of a P4-ATPase flippase complex which catalyzes the hydrolysis of ATP coupled to the transport of aminophospholipids from the outer to the inner leaflet of various membranes and ensures the maintenance of asymmetric distribution of phospholipids. Able to translocate phosphatidylserine, but not phosphatidylcholine. Phospholipid translocation also seems to be implicated in vesicle formation and in uptake of lipid signaling molecules. Reconstituted to liposomes, the ATP8A2:TMEM30A flippase complex predominantly transports phosphatidylserine (PS) and to a lesser extent phosphatidylethanolamine (PE). Phospholipid translocation is not associated with a countertransport of an inorganic ion or other charged substrate from the cytoplasmic side toward the exoplasm in connection with the phosphorylation from ATP. ATP8A2:TMEM30A may be involved in regulation of neurite outgrowth. Proposed to function in the generation and maintenance of phospholipid asymmetry in photoreceptor disk membranes and neuronal axon membranes. May be involved in vesicle trafficking in neuronal cells. Required for normal visual and auditory function; involved in photoreceptor and inner ear spiral ganglion cell survival. The protein is Phospholipid-transporting ATPase IB of Homo sapiens (Human).